Reading from the N-terminus, the 485-residue chain is MSLGEINENVKLAREYALLGNYSSAVVCYQGVLEQIKKYLYSVRDSSLQQKWQQVWQEINEETKQVREIMTTLESFQMESTPSKPSSFAQDNDIMPVHVEHRSSPCVVRKSSVPYKDSKGHGNRLSVGPRGQARPSPRVANGDKGKPQKSKEKKENPSKPKEDKNKAEAVETEVKRFDRGGEDKDLIDALERDIISQNPNVTWDDIADLEEAKKLLKEAVVLPMWMPEFFKGIRRPWKGVLMVGPPGTGKTLLAKAVATECRTTFFNVSSSTLTSKYRGESEKLVRLLFEMARFYAPTTIFIDEIDSICSRRGTSEEHEASRRVKAELLVQMDGVGGTSENDPSKMVMVLAATNFPWDIDEALRRRLEKRIYIPLPSAKGRVDLLKINLKELDLANDVNMDKIAEQMEGYSGADITNVCRDASLMAMRRRIEGLTPEEIRNLPKDEMHMPTTMEDFETALKKVSKSVSAADLEKYEKWIAEFGSC.

The disordered stretch occupies residues 101-173; sequence HRSSPCVVRK…KNKAEAVETE (73 aa). The segment covering 141 to 173 has biased composition (basic and acidic residues); the sequence is NGDKGKPQKSKEKKENPSKPKEDKNKAEAVETE. 244-251 serves as a coordination point for ATP; the sequence is GPPGTGKT.

This sequence belongs to the AAA ATPase family. Katanin p60 subunit A1 subfamily. As to quaternary structure, can homooligomerize into hexameric rings, which may be promoted by interaction with microtubules. Interacts with katnb1, which may serve as a targeting subunit.

Its subcellular location is the cytoplasm. It is found in the cytoskeleton. The protein resides in the microtubule organizing center. It localises to the centrosome. The protein localises to the spindle pole. Its subcellular location is the spindle. It catalyses the reaction n ATP + n H2O + a microtubule = n ADP + n phosphate + (n+1) alpha/beta tubulin heterodimers.. Its activity is regulated as follows. ATPase activity is stimulated by microtubules, which promote homooligomerization. ATP-dependent microtubule severing is stimulated by interaction with katnb1. Its function is as follows. Catalytic subunit of a complex which severs microtubules in an ATP-dependent manner. Microtubule severing may promote rapid reorganization of cellular microtubule arrays and the release of microtubules from the centrosome following nucleation. The protein is Katanin p60 ATPase-containing subunit A1 (katna1) of Danio rerio (Zebrafish).